Reading from the N-terminus, the 180-residue chain is Insulin-like growth factor 2 (180 aa).

The signal sequence occupies residues 1-24; it reads MGIPVGKSMLVLLISLAFALCCIA. Residues 25-52 form a b region; that stretch reads AYGPGETLCGGELVDTLQFVCSDRGFYF. Cystine bridges form between C33–C71, C45–C84, and C70–C75. Residues 53–64 are c; sequence SRPSSRANRRSR. Residues 65 to 85 form an a region; sequence GIVEECCFRSCDLALLETYCA. The interval 86 to 91 is d; sequence TPAKSE. Positions 92–180 are cleaved as a propeptide — e peptide; the sequence is RDVSTSQAVL…ASSEMSSNHQ (89 aa). The interval 157–180 is disordered; it reads PLIVLPPKDPAHGGASSEMSSNHQ.

It belongs to the insulin family. Interacts with MYORG; this interaction is required for IGF2 secretion. Interacts with integrins ITGAV:ITGB3 and ITGA6:ITGB4; integrin-binding is required for IGF2 signaling. Interacts with IGFBP2. Post-translationally, proteolytically processed by PCSK4, proIGF2 is cleaved at Arg-128 and Arg-92 to generate big-IGF2 and mature IGF2. In terms of tissue distribution, expressed in the heart, blood serum, kidney and skeletal muscle including the tibialis anterior muscle.

The protein localises to the secreted. Its function is as follows. The insulin-like growth factors possess growth-promoting activity. Major fetal growth hormone in mammals. Plays a key role in regulating fetoplacental development. IGF2 is influenced by placental lactogen. Also involved in tissue differentiation. In adults, involved in glucose metabolism in adipose tissue, skeletal muscle and liver. Acts as a ligand for integrin which is required for IGF2 signaling. Positively regulates myogenic transcription factor MYOD1 function by facilitating the recruitment of transcriptional coactivators, thereby controlling muscle terminal differentiation. Inhibits myoblast differentiation and modulates metabolism via increasing the mitochondrial respiration rate. Functionally, preptin undergoes glucose-mediated co-secretion with insulin, and acts as a physiological amplifier of glucose-mediated insulin secretion. Exhibits osteogenic properties by increasing osteoblast mitogenic activity through phosphoactivation of MAPK1 and MAPK3. This Mus musculus (Mouse) protein is Insulin-like growth factor 2.